We begin with the raw amino-acid sequence, 110 residues long: U1-lycotoxin-Ls1aa (110 aa).

The first 20 residues, 1–20, serve as a signal peptide directing secretion; sequence MKFVLLFGVLLVTLFSYSSA. A propeptide spanning residues 21 to 44 is cleaved from the precursor; that stretch reads EMLDDFDQADEDELLSLIEKEEAR. Intrachain disulfides connect Cys-47/Cys-62, Cys-54/Cys-71, Cys-61/Cys-89, and Cys-73/Cys-87.

It belongs to the neurotoxin 19 (CSTX) family. 03 subfamily. In terms of tissue distribution, expressed by the venom gland.

It localises to the secreted. This Lycosa singoriensis (Wolf spider) protein is U1-lycotoxin-Ls1aa.